The primary structure comprises 212 residues: Orotate phosphoribosyltransferase (212 aa).

Residue Lys26 coordinates 5-phospho-alpha-D-ribose 1-diphosphate. 34–35 (FF) serves as a coordination point for orotate. 5-phospho-alpha-D-ribose 1-diphosphate contacts are provided by residues 72–73 (YK), Arg99, Lys100, Lys103, His105, and 124–132 (DDVITVGTA). Orotate contacts are provided by Thr128 and Arg156.

The protein belongs to the purine/pyrimidine phosphoribosyltransferase family. PyrE subfamily. As to quaternary structure, homodimer. It depends on Mg(2+) as a cofactor.

It carries out the reaction orotidine 5'-phosphate + diphosphate = orotate + 5-phospho-alpha-D-ribose 1-diphosphate. Its pathway is pyrimidine metabolism; UMP biosynthesis via de novo pathway; UMP from orotate: step 1/2. In terms of biological role, catalyzes the transfer of a ribosyl phosphate group from 5-phosphoribose 1-diphosphate to orotate, leading to the formation of orotidine monophosphate (OMP). The chain is Orotate phosphoribosyltransferase from Ruthia magnifica subsp. Calyptogena magnifica.